The sequence spans 112 residues: Nitrogen regulatory protein P-II 1 (112 aa).

Tyr-51 is subject to O-UMP-tyrosine.

This sequence belongs to the P(II) protein family. Homotrimer. In terms of processing, uridylylated/deuridylylated by GlnD.

P-II indirectly controls the transcription of the glutamine synthetase gene (GlnA). P-II prevents NR-II-catalyzed conversion of NR-I to NR-I-phosphate, the transcriptional activator of GlnA. When P-II is uridylylated to P-II-UMP, these events are reversed. When the ratio of Gln to 2-ketoglutarate decreases, P-II is uridylylated to P-II-UMP, which causes the deadenylation of glutamine synthetase by GlnE, so activating the enzyme. The sequence is that of Nitrogen regulatory protein P-II 1 (glnB) from Escherichia coli O157:H7.